Here is a 426-residue protein sequence, read N- to C-terminus: Deoxyguanosinetriphosphate triphosphohydrolase-like protein (426 aa).

The disordered stretch occupies residues 1–23 (MYPYSESDAQRLHQEAPKASQLA). Positions 67-217 (RLTHSLEVAQ…MDFSDDIAYS (151 aa)) constitute an HD domain.

The protein belongs to the dGTPase family. Type 2 subfamily.

This is Deoxyguanosinetriphosphate triphosphohydrolase-like protein from Corynebacterium efficiens (strain DSM 44549 / YS-314 / AJ 12310 / JCM 11189 / NBRC 100395).